A 66-amino-acid polypeptide reads, in one-letter code: Small archaeal modifier protein 2 (66 aa).

A Glycyl lysine isopeptide (Lys-Gly) (interchain with G-Cter in SAMP2) cross-link involves residue Lys58. 1-thioglycine; alternate is present on Gly66. Gly66 is subject to Glycyl adenylate; alternate. Gly66 is covalently cross-linked (Glycyl lysine isopeptide (Gly-Lys) (interchain with K-? in acceptor proteins); alternate).

As to quaternary structure, monomer. Monomeric and polymeric forms interact with NcsA. The C-terminal glycine is likely acyl-adenylated (-COAMP) by UbaA, and also probably thiocarboxylated (-COSH) to function in sulfur transfer.

Its function is as follows. Functions as a protein modifier covalently attached to lysine residues of substrate proteins, as well as a sulfur carrier in tRNA thiolation. The protein modification process is termed sampylation and involves the formation of an isopeptide bond between the SAMP2 C-terminal glycine carboxylate and the epsilon-amino group of lysine residues on target proteins. Is able to form polymeric chains with itself at Lys-58, similar to ubiquitin and other ubiquitin-like proteins. May serve as a proteolytic signal in the cell to target proteins for degradation by proteasomes. This chain is Small archaeal modifier protein 2 (samp2), found in Haloferax volcanii (strain ATCC 29605 / DSM 3757 / JCM 8879 / NBRC 14742 / NCIMB 2012 / VKM B-1768 / DS2) (Halobacterium volcanii).